We begin with the raw amino-acid sequence, 109 residues long: Nucleoid-associated protein Spro_1136 (109 aa).

Disordered regions lie at residues 1–21 and 90–109; these read MFGK…QEKM and EKMA…KMPF. The span at 11–21 shows a compositional bias: low complexity; the sequence is MKQAQQMQEKM.

The protein belongs to the YbaB/EbfC family. In terms of assembly, homodimer.

The protein resides in the cytoplasm. It localises to the nucleoid. In terms of biological role, binds to DNA and alters its conformation. May be involved in regulation of gene expression, nucleoid organization and DNA protection. The protein is Nucleoid-associated protein Spro_1136 of Serratia proteamaculans (strain 568).